Here is a 95-residue protein sequence, read N- to C-terminus: Co-chaperonin GroES (95 aa).

It belongs to the GroES chaperonin family. Heptamer of 7 subunits arranged in a ring. Interacts with the chaperonin GroEL.

It localises to the cytoplasm. Functionally, together with the chaperonin GroEL, plays an essential role in assisting protein folding. The GroEL-GroES system forms a nano-cage that allows encapsulation of the non-native substrate proteins and provides a physical environment optimized to promote and accelerate protein folding. GroES binds to the apical surface of the GroEL ring, thereby capping the opening of the GroEL channel. This is Co-chaperonin GroES from Rickettsia bellii (strain RML369-C).